Reading from the N-terminus, the 205-residue chain is Ribonuclease HII (205 aa).

Residues 13-205 (TIVAGVDEVG…APVKYMLSMC (193 aa)) form the RNase H type-2 domain. A divalent metal cation-binding residues include Asp-19, Glu-20, and Asp-114.

Belongs to the RNase HII family. Requires Mn(2+) as cofactor. Mg(2+) serves as cofactor.

It localises to the cytoplasm. It carries out the reaction Endonucleolytic cleavage to 5'-phosphomonoester.. Its function is as follows. Endonuclease that specifically degrades the RNA of RNA-DNA hybrids. The sequence is that of Ribonuclease HII from Blochmanniella floridana.